Here is a 133-residue protein sequence, read N- to C-terminus: Small ribosomal subunit protein uS9 (133 aa).

This sequence belongs to the universal ribosomal protein uS9 family.

The protein is Small ribosomal subunit protein uS9 of Ureaplasma parvum serovar 3 (strain ATCC 700970).